A 522-amino-acid polypeptide reads, in one-letter code: Probable protein kinase UbiB (522 aa).

Residues 119–496 (SFDADPVASA…QRRTNRLLLT (378 aa)) enclose the Protein kinase domain. ATP-binding positions include 125 to 133 (VASASIAQV) and lysine 147. Aspartate 282 functions as the Proton acceptor in the catalytic mechanism. The chain crosses the membrane as a helical span at residues 494–514 (LLTVFYLIGGFVAGGLFAHWI).

The protein belongs to the ABC1 family. UbiB subfamily.

The protein localises to the cell inner membrane. It participates in cofactor biosynthesis; ubiquinone biosynthesis [regulation]. Its function is as follows. Is probably a protein kinase regulator of UbiI activity which is involved in aerobic coenzyme Q (ubiquinone) biosynthesis. This is Probable protein kinase UbiB from Leptothrix cholodnii (strain ATCC 51168 / LMG 8142 / SP-6) (Leptothrix discophora (strain SP-6)).